The following is a 453-amino-acid chain: uncharacterized protein (453 aa).

This is an uncharacterized protein from Caenorhabditis elegans.